We begin with the raw amino-acid sequence, 874 residues long: Alanine--tRNA ligase (874 aa).

Zn(2+) is bound by residues His-564, His-568, Cys-665, and His-669.

The protein belongs to the class-II aminoacyl-tRNA synthetase family. It depends on Zn(2+) as a cofactor.

It is found in the cytoplasm. It catalyses the reaction tRNA(Ala) + L-alanine + ATP = L-alanyl-tRNA(Ala) + AMP + diphosphate. In terms of biological role, catalyzes the attachment of alanine to tRNA(Ala) in a two-step reaction: alanine is first activated by ATP to form Ala-AMP and then transferred to the acceptor end of tRNA(Ala). Also edits incorrectly charged Ser-tRNA(Ala) and Gly-tRNA(Ala) via its editing domain. This chain is Alanine--tRNA ligase, found in Paraburkholderia phymatum (strain DSM 17167 / CIP 108236 / LMG 21445 / STM815) (Burkholderia phymatum).